We begin with the raw amino-acid sequence, 162 residues long: Transcription elongation factor GreA (162 aa).

Positions 46–77 form a coiled coil; that stretch reads RENAEYKAAREEQTRLNNMVTRLQEEIERAQV.

It belongs to the GreA/GreB family.

Functionally, necessary for efficient RNA polymerase transcription elongation past template-encoded arresting sites. The arresting sites in DNA have the property of trapping a certain fraction of elongating RNA polymerases that pass through, resulting in locked ternary complexes. Cleavage of the nascent transcript by cleavage factors such as GreA or GreB allows the resumption of elongation from the new 3'terminus. GreA releases sequences of 2 to 3 nucleotides. The protein is Transcription elongation factor GreA of Treponema pallidum (strain Nichols).